A 194-amino-acid chain; its full sequence is DPY30 domain-containing protein 2 (194 aa).

The tract at residues 126-172 (EAFEKEPLKQESLPGTSDMIPGMPQQSPSSEPSVSSQVDLNTGTPQE) is disordered. Positions 149-163 (PQQSPSSEPSVSSQV) are enriched in low complexity.

It belongs to the dpy-30 family.

This is DPY30 domain-containing protein 2 (DYDC2) from Bos taurus (Bovine).